We begin with the raw amino-acid sequence, 69 residues long: DNA-directed RNA polymerase subunit omega (69 aa).

It belongs to the RNA polymerase subunit omega family. As to quaternary structure, the RNAP catalytic core consists of 2 alpha, 1 beta, 1 beta' and 1 omega subunit. When a sigma factor is associated with the core the holoenzyme is formed, which can initiate transcription.

The catalysed reaction is RNA(n) + a ribonucleoside 5'-triphosphate = RNA(n+1) + diphosphate. In terms of biological role, promotes RNA polymerase assembly. Latches the N- and C-terminal regions of the beta' subunit thereby facilitating its interaction with the beta and alpha subunits. The sequence is that of DNA-directed RNA polymerase subunit omega from Exiguobacterium sp. (strain ATCC BAA-1283 / AT1b).